The following is a 479-amino-acid chain: PTS system sucrose-specific EIIBC component (479 aa).

The region spanning 4-87 (PAVAKELLTL…AKLTGMSEMS (84 aa)) is the PTS EIIB type-1 domain. Cys26 acts as the Phosphocysteine intermediate; for EIIB activity in catalysis. 11 helical membrane passes run 112-132 (IFVPIIPAIVAGGLLMGIYNL), 158-178 (MINTFANAPFVYLPILLAFSA), 182-202 (FGGNPYLGAALGMLMVHPDLL), 204-224 (GWGFGGASVSGNIPVWNILGF), 232-252 (QGSVLPVLVSAFILAKVELGL), 264-284 (LTPLLAIFIAGLLTFTVVGPF), 303-323 (AGFVGGAVFGLIYAPFVITGM), 345-365 (FIFPIAAMSNVSQGAAALAVG), 376-396 (IAIPSGVTGLLGITEPAMFGV), 403-423 (PFIAAVCAAALSSAFITMFNV), and 448-468 (IAGMVIAFLTAFVLTIVLGIG). One can recognise a PTS EIIC type-1 domain in the interval 120–477 (IVAGGLLMGI…GDRAKVGKKA (358 aa)).

The protein localises to the cell inner membrane. It carries out the reaction N(pros)-phospho-L-histidyl-[protein](out) + sucrose = sucrose 6(G)-phosphate(in) + L-histidyl-[protein]. The phosphoenolpyruvate-dependent sugar phosphotransferase system (sugar PTS), a major carbohydrate active transport system, catalyzes the phosphorylation of incoming sugar substrates concomitantly with their translocation across the cell membrane. This system is involved in sucrose transport. The polypeptide is PTS system sucrose-specific EIIBC component (Vibrio alginolyticus).